The chain runs to 252 residues: 3-dehydroquinate dehydratase (252 aa).

Residues Ser-21, 46–48, and Arg-82 each bind 3-dehydroquinate; that span reads EWR. His-143 (proton donor/acceptor) is an active-site residue. Lys-170 (schiff-base intermediate with substrate) is an active-site residue. 3 residues coordinate 3-dehydroquinate: Arg-213, Ser-232, and Gln-236.

This sequence belongs to the type-I 3-dehydroquinase family. As to quaternary structure, dimer of dimers.

The enzyme catalyses 3-dehydroquinate = 3-dehydroshikimate + H2O. Its pathway is metabolic intermediate biosynthesis; chorismate biosynthesis; chorismate from D-erythrose 4-phosphate and phosphoenolpyruvate: step 3/7. Its activity is regulated as follows. Inhibited by (2R)-2-methyl-3-dehydroquinic acid. Involved in the third step of the chorismate pathway, which leads to the biosynthesis of aromatic amino acids. Catalyzes the cis-dehydration of 3-dehydroquinate (DHQ) and introduces the first double bond of the aromatic ring to yield 3-dehydroshikimate. The reaction involves the formation of an imine intermediate between the keto group of 3-dehydroquinate and the epsilon-amino group of Lys-170 at the active site. The polypeptide is 3-dehydroquinate dehydratase (Salmonella typhi).